We begin with the raw amino-acid sequence, 326 residues long: Beta-ketoacyl-[acyl-carrier-protein] synthase III (326 aa).

Catalysis depends on residues C112 and H251. The ACP-binding stretch occupies residues 252–256 (QANSR). N281 is an active-site residue.

It belongs to the thiolase-like superfamily. FabH family. In terms of assembly, homodimer.

The protein resides in the cytoplasm. It catalyses the reaction malonyl-[ACP] + acetyl-CoA + H(+) = 3-oxobutanoyl-[ACP] + CO2 + CoA. It functions in the pathway lipid metabolism; fatty acid biosynthesis. Catalyzes the condensation reaction of fatty acid synthesis by the addition to an acyl acceptor of two carbons from malonyl-ACP. Catalyzes the first condensation reaction which initiates fatty acid synthesis and may therefore play a role in governing the total rate of fatty acid production. Possesses both acetoacetyl-ACP synthase and acetyl transacylase activities. Its substrate specificity determines the biosynthesis of branched-chain and/or straight-chain of fatty acids. This Clostridium botulinum (strain ATCC 19397 / Type A) protein is Beta-ketoacyl-[acyl-carrier-protein] synthase III.